Reading from the N-terminus, the 737-residue chain is MGDRGARPGRLMPMLALLSWAAGLGVAEETPGRIPADKLLVITVATKENDGFHRFMNSAKYFNYTVKVLGQGQEWRGGDGMNSIGGGQKVRLLKEAMEHYASQEDLVILFTECFDVVFAGGPEEVLKKFQKTNHKIVFAADGLLWPDKRLADKYPVVHIGKRYLNSGGFIGYAPYISRLVQQWNLQDNDDDQLFYTKVYIDPLKREAFNITLDHKCKIFQALNGATDEVVLKFENGKSRVKNTFYETLPVAINGNGPTKILLNYFGNYVPNSWTQENGCALCDVDTIDLSTVDVPPKVTLGVFIEQPTPFLPRFLNLLLTLDYPKEALQLFIHNKEVYHEKDIKVFVDKAKHDISSIKIVGPEENLSQAEARNMGMDFCRQDEKCDYYFSVDADVVLTNPRTLKFLIEQNRKIIAPLVTRHGKLWSNFWGALSPDGYYARSEDYVDIVQGNRVGIWNVPYMANVYLIQGKTLRSEMNERNYFVRDKLDPDMALCRNARDMGVFMYISNRHEFGRLISTANYNTSHLNNDFWQIFENPVDWKEKYINRDYSKIFTENIVEQPCPDVFWFPIFSERACDELVEEMEHYGKWSGGKHHDSRISGGYENVPTDDIHMKQIGLENVWLHFIREFIAPVTLKVFAGYYTKGFALLNFVVKYSPERQRSLRPHHDASTFTINIALNNVGEDFQGGGCKFLRYNCSIESPRKGWSFMHPGRLTHLHEGLPVKNGTRYIAVSFIDP.

Positions 1–25 are cleaved as a signal peptide; the sequence is MGDRGARPGRLMPMLALLSWAAGLG. Asn-63 and Asn-209 each carry an N-linked (GlcNAc...) asparagine glycan. The residue at position 320 (Thr-320) is a Phosphothreonine. Tyr-323 bears the Phosphotyrosine mark. Asn-365 and Asn-522 each carry an N-linked (GlcNAc...) asparagine glycan. The 94-residue stretch at 644-737 folds into the Fe2OG dioxygenase domain; sequence KGFALLNFVV…RYIAVSFIDP (94 aa). Fe cation-binding residues include His-666 and Asp-668. A glycan (N-linked (GlcNAc...) asparagine) is linked at Asn-696. Lys-704 carries the post-translational modification N6-succinyllysine. His-718 is a Fe cation binding site. A glycan (N-linked (GlcNAc...) asparagine) is linked at Asn-725. The active site involves Arg-728.

Homodimer. The cofactor is Fe(2+). L-ascorbate serves as cofactor. Is highly expressed in the heart, lung, kidney, eye, ovary and placenta.

It localises to the rough endoplasmic reticulum membrane. The enzyme catalyses L-lysyl-[collagen] + 2-oxoglutarate + O2 = (5R)-5-hydroxy-L-lysyl-[collagen] + succinate + CO2. Functionally, forms hydroxylysine residues in -Xaa-Lys-Gly- sequences in collagens. These hydroxylysines serve as sites of attachment for carbohydrate units and are essential for the stability of the intermolecular collagen cross-links. This Mus musculus (Mouse) protein is Procollagen-lysine,2-oxoglutarate 5-dioxygenase 2 (Plod2).